The primary structure comprises 51 residues: UPF0391 membrane protein Mbur_2216 (51 aa).

2 helical membrane passes run 1 to 21 and 31 to 51; these read MADLIGLAIVFLIFALVAYVL and MTIAKWLVIIFIVLAIITILL.

This sequence belongs to the UPF0391 family.

It localises to the cell membrane. In Methanococcoides burtonii (strain DSM 6242 / NBRC 107633 / OCM 468 / ACE-M), this protein is UPF0391 membrane protein Mbur_2216.